The sequence spans 90 residues: Acylphosphatase (90 aa).

The Acylphosphatase-like domain occupies 3–90 (KKQFIVYGLV…REFTDFSVRY (88 aa)). Active-site residues include arginine 18 and asparagine 36.

It belongs to the acylphosphatase family.

The catalysed reaction is an acyl phosphate + H2O = a carboxylate + phosphate + H(+). This chain is Acylphosphatase (acyP), found in Pasteurella multocida (strain Pm70).